The primary structure comprises 376 residues: Carboxylic ester hydrolase LipN (376 aa).

Active-site residues include Ser-216, Asp-316, and His-346.

It belongs to the 'GDXG' lipolytic enzyme family.

The protein resides in the cytoplasm. It carries out the reaction a carboxylic ester + H2O = an alcohol + a carboxylate + H(+). The catalysed reaction is an acetyl ester + H2O = an aliphatic alcohol + acetate + H(+). It catalyses the reaction a butanoate ester + H2O = an aliphatic alcohol + butanoate + H(+). The enzyme catalyses an octanoate ester + H2O = an aliphatic alcohol + octanoate + H(+). It carries out the reaction decanoate ester + H2O = decanoate + an aliphatic alcohol + H(+). The catalysed reaction is a dodecanoate ester + H2O = an aliphatic alcohol + dodecanoate + H(+). It catalyses the reaction 1,2,3-tributanoylglycerol + H2O = dibutanoylglycerol + butanoate + H(+). The enzyme catalyses 4-acetoxyphenol + H2O = hydroquinone + acetate + H(+). Its activity is regulated as follows. Completely inhibited by tetrahydrolipstatin (THL), RHC-80267 and N-bromosuccinimide. In terms of biological role, non specific carboxylic ester hydrolase. Hydrolyzes various pNP-esters, with a preference for short carbon chain substrates. Can also hydrolyze tributyrin to di- and monobutyrin and 4-hydroxyphenylacetate to hydroquinone. This Mycobacterium tuberculosis (strain ATCC 25618 / H37Rv) protein is Carboxylic ester hydrolase LipN.